Consider the following 481-residue polypeptide: Guanine nucleotide exchange factor C9orf72 homolog (481 aa).

The region spanning S23–S194 is the uDENN C9ORF72-type domain. The cDENN C9ORF72-type domain occupies D200 to T343. The 95-residue stretch at V370–F464 folds into the dDENN C9ORF72-type domain. The interval S461–F481 is required for the homodimerization of the C9orf72-SMCR8 complex.

Component of the C9orf72-SMCR8 complex, at least composed of C9orf72, SMCR8 and WDR41. The complex is formed of two protomers, each individually consisting of one molecule each of C9orf72, SMCR8 and WDR41. The protomers homodimerize via an interaction between C9orf72 (via C-terminus) and SMCR8 (via N-terminus). Within each protomer SMCR8 (via DENN domain) acts as a bridging protein between WDR41 (via C-terminus and N-terminus) and C9orf72 (via C-terminus). The C9orf72-SMCR8 complex associates with the ULK1/ATG1 kinase complex. Interacts with ULK1/ATG1 kinase complex members ULK1, ATG13 and RB1CC1. Interacts with SMCR8; the interaction is direct. Interacts with HNRNPA1, HNRNPA2B1 and UBQLN2. Interacts with small Rab GTPase RAB1A; the interaction mediates recruitment of RAB1A to the ULK1/ATG1 kinase complex. Also interacts with small Rab GTPase RAB7A. Interacts with cofilin. Interacts with GTP-binding proteins ARF1 and ARF6. Interacts with the DLG4/PSD-95. Interacts with CARM1 (via PH domain-like fold). Interacts with RAB39A and RAB39B (in GDP-bound forms); functions as GEF for RAB39A and RAB39B. In terms of tissue distribution, expressed in postnatal cerebellum and cortex (at protein level). Neuronal expression is detected in several regions of the adult brain and spinal cord. Prominent expression also observed in embryonic and early postnatal neurons including retinal ganglion cells, sensory neurons in the olfactory epithelium and in dorsal root ganglia, and spinal motor neurons. Expressed in the developing cerebral cortex, cerebellum, olfactory bulb, hippocampus and spinal cord in the embryo and in P0 cortical neurons and astrocytes. Also expressed in non-neuronal tissues such as kidney and tooth. In the spleen, highly expressed in myeloid cells compared to B cell and T cell populations where expression is much lower. In the brain, highly expressed in microglia. Expressed in the forebrain, including in the glomerular layer of the olfactory bulb (at protein level).

It is found in the nucleus. It localises to the cytoplasm. Its subcellular location is the P-body. The protein resides in the stress granule. The protein localises to the endosome. It is found in the lysosome. It localises to the cytoplasmic vesicle. Its subcellular location is the autophagosome. The protein resides in the autolysosome. The protein localises to the secreted. It is found in the cell projection. It localises to the axon. Its subcellular location is the growth cone. The protein resides in the perikaryon. The protein localises to the dendrite. It is found in the presynapse. It localises to the postsynapse. Functionally, acts as a guanine-nucleotide releasing factor (GEF) for Rab GTPases by promoting the conversion of inactive RAB-GDP to the active form RAB-GTP. Acts as a GEF for RAB39A which enables HOPS-mediated autophagosome-lysosome membrane tethering and fusion in mammalian autophagy. Component of the C9orf72-SMCR8 complex where both subunits display GEF activity and that regulates autophagy. As part of the C9orf72-SMCR8-WDR41 (CSW) complex, functions as GEF for RAB8A, and RAB39B, thereby promoting autophagosome maturation. As part of the C9orf72-SMCR8 complex, also functions as GTPase activating protein (GAP) for RAB8A and RAB11A in vitro. The C9orf72-SMCR8 complex also acts as a regulator of autophagy initiation by interacting with the ULK1/ATG1 kinase complex and modulating its protein kinase activity. Promotes initiation of autophagy by regulating the RAB1A-dependent trafficking of the ULK1/ATG1 kinase complex to the phagophore which leads to autophagosome formation. Acts as a regulator of mTORC1 signaling by promoting phosphorylation of mTORC1 substrates. Plays a role in endosomal trafficking. May be involved in regulating the maturation of phagosomes to lysosomes. Promotes the lysosomal localization and lysosome-mediated degradation of CARM1 which leads to inhibition of starvation-induced lipid metabolism. Regulates actin dynamics in motor neurons by inhibiting the GTP-binding activity of ARF6, leading to ARF6 inactivation. This reduces the activity of the LIMK1 and LIMK2 kinases which are responsible for phosphorylation and inactivation of CFL1/cofilin, leading to cofilin activation. Positively regulates axon extension and axon growth cone size in spinal motor neurons. Required for SMCR8 protein expression and localization at pre- and post-synaptic compartments in the forebrain, also regulates protein abundance of RAB3A and GRIA1/GLUR1 in post-synaptic compartments in the forebrain and hippocampus. Plays a role within the hematopoietic system in restricting inflammation and the development of autoimmunity. The protein is Guanine nucleotide exchange factor C9orf72 homolog of Mus musculus (Mouse).